The following is a 494-amino-acid chain: Cytochrome P450 2C44 (494 aa).

Residues M1–T25 form the signal peptide. S131 is subject to Phosphoserine. Residues K253 and K379 each carry the N6-acetyllysine modification. C439 is a heme binding site.

The protein belongs to the cytochrome P450 family. The cofactor is heme. As to expression, highly expressed in liver, particularly in hepatocytes and bile duct epithelial cells (at protein level). Expressed in nephron segments. Prominent expression is detected in proximal tubules at the corticomedullary junction (at protein level). Also expressed in renal cortical collecting duct. Lower expression levels are detected in adrenal glands.

The protein resides in the endoplasmic reticulum membrane. Its subcellular location is the microsome membrane. It catalyses the reaction (5Z,8Z,11Z,14Z)-eicosatetraenoate + reduced [NADPH--hemoprotein reductase] + O2 = (8R,9S)-epoxy-(5Z,11Z,14Z)-eicosatrienoate + oxidized [NADPH--hemoprotein reductase] + H2O + H(+). It carries out the reaction (5Z,8Z,11Z,14Z)-eicosatetraenoate + reduced [NADPH--hemoprotein reductase] + O2 = (11R,12S)-epoxy-(5Z,8Z,14Z)-eicosatrienoate + oxidized [NADPH--hemoprotein reductase] + H2O + H(+). The enzyme catalyses (5Z,8Z,11Z,14Z)-eicosatetraenoate + reduced [NADPH--hemoprotein reductase] + O2 = 14,15-epoxy-(5Z,8Z,11Z)-eicosatrienoate + oxidized [NADPH--hemoprotein reductase] + H2O + H(+). The catalysed reaction is (5Z,8Z,11Z,14Z,17Z)-eicosapentaenoate + reduced [NADPH--hemoprotein reductase] + O2 = 8,9-epoxy-(5Z,11Z,14Z,17Z)-eicosatetraenoate + oxidized [NADPH--hemoprotein reductase] + H2O + H(+). It catalyses the reaction (5Z,8Z,11Z,14Z,17Z)-eicosapentaenoate + reduced [NADPH--hemoprotein reductase] + O2 = 11,12-epoxy-(5Z,8Z,14Z,17Z)-eicosatetraenoate + oxidized [NADPH--hemoprotein reductase] + H2O + H(+). It carries out the reaction (5Z,8Z,11Z,14Z,17Z)-eicosapentaenoate + reduced [NADPH--hemoprotein reductase] + O2 = 14,15-epoxy-(5Z,8Z,11Z,17Z)-eicosatetraenoate + oxidized [NADPH--hemoprotein reductase] + H2O + H(+). The enzyme catalyses (5Z,8Z,11Z,14Z,17Z)-eicosapentaenoate + reduced [NADPH--hemoprotein reductase] + O2 = (17R,18S)-epoxy-(5Z,8Z,11Z,14Z)-eicosatetraenoate + oxidized [NADPH--hemoprotein reductase] + H2O + H(+). The catalysed reaction is (5Z,8Z,11Z,14Z,17Z)-eicosapentaenoate + reduced [NADPH--hemoprotein reductase] + O2 = (17S,18R)-epoxy-(5Z,8Z,11Z,14Z)-eicosatetraenoate + oxidized [NADPH--hemoprotein reductase] + H2O + H(+). It catalyses the reaction 20-hydroxy-(5Z,8Z,11Z,14Z)-eicosatetraenoate + reduced [NADPH--hemoprotein reductase] + O2 = 20-hydroxy-8,9-epoxy-(5Z,11Z,14Z)-eicosatrienoate + oxidized [NADPH--hemoprotein reductase] + H2O + H(+). It participates in lipid metabolism; arachidonate metabolism. Its function is as follows. A cytochrome P450 monooxygenase involved in polyunsaturated fatty acids (PUFAs) metabolism and signaling. Catalyzes preferentially the epoxidation of double bonds of PUFAs. Converts arachidonic acid (ARA, C20:4(n-6)) primarily to stereospecific products 8R,9S-epoxyeicosatrienoate (EET) and 11R,12S-EET. Plays a major role in the formation of EETs and hydroxy-EETs (HEETs) in kidney. Via EETs may inhibit the epithelial sodium channels (ENaCs) in nephron segments, preventing excessive sodium absorption during high dietary salt intake. Participates in the formation of anti-inflammatory hydroxyepoxyeicosatrienoic acids (HEETs) by converting 20-hydroxyeicosatetraenoic acid (20-HETE) to 20,8,9-HEET, an activator of PPARA. Metabolizes eicosapentaenoic acid (EPA, C20:5(n-3)) to epoxyeicosatetraenoic acid (EETeTr) regioisomers, 8,9-, 11,12-, 14,15-, and 17,18- EETeTr, preferentially producing 17R,18S enantiomer. Mechanistically, uses molecular oxygen inserting one oxygen atom into a substrate, and reducing the second into a water molecule, with two electrons provided by NADPH via cytochrome P450 reductase (CPR; NADPH-ferrihemoprotein reductase). The chain is Cytochrome P450 2C44 from Mus musculus (Mouse).